The chain runs to 204 residues: Holliday junction branch migration complex subunit RuvA (204 aa).

The tract at residues 1–65 (MIGRLRGAVA…SAGLRLYGFG (65 aa)) is domain I. The segment at 66–142 (TREDRRAFVL…PITDGPVLMT (77 aa)) is domain II. The flexible linker stretch occupies residues 143-152 (APGAVAAAPA). Positions 152 to 204 (AKAAPTGDAVAALMGLGVAEVNARRVVEAAAAKLGDEATVQALIKAGLQELGR) are domain III.

Belongs to the RuvA family. In terms of assembly, homotetramer. Forms an RuvA(8)-RuvB(12)-Holliday junction (HJ) complex. HJ DNA is sandwiched between 2 RuvA tetramers; dsDNA enters through RuvA and exits via RuvB. An RuvB hexamer assembles on each DNA strand where it exits the tetramer. Each RuvB hexamer is contacted by two RuvA subunits (via domain III) on 2 adjacent RuvB subunits; this complex drives branch migration. In the full resolvosome a probable DNA-RuvA(4)-RuvB(12)-RuvC(2) complex forms which resolves the HJ.

It localises to the cytoplasm. Functionally, the RuvA-RuvB-RuvC complex processes Holliday junction (HJ) DNA during genetic recombination and DNA repair, while the RuvA-RuvB complex plays an important role in the rescue of blocked DNA replication forks via replication fork reversal (RFR). RuvA specifically binds to HJ cruciform DNA, conferring on it an open structure. The RuvB hexamer acts as an ATP-dependent pump, pulling dsDNA into and through the RuvAB complex. HJ branch migration allows RuvC to scan DNA until it finds its consensus sequence, where it cleaves and resolves the cruciform DNA. This Caulobacter sp. (strain K31) protein is Holliday junction branch migration complex subunit RuvA.